A 477-amino-acid polypeptide reads, in one-letter code: C3a anaphylatoxin chemotactic receptor (477 aa).

Over 1-23 the chain is Extracellular; it reads MESFDADTNSTDLHSRPLFQPQD. N-linked (GlcNAc...) asparagine glycosylation occurs at asparagine 9. The chain crosses the membrane as a helical span at residues 24-46; that stretch reads IASMVILGLTCLLGLLGNGLVLW. Residues 47 to 57 lie on the Cytoplasmic side of the membrane; that stretch reads VAGVKMKTTVN. The chain crosses the membrane as a helical span at residues 58–80; it reads TVWFLHLTLADFLCCLSLPFSLA. Topologically, residues 81-96 are extracellular; the sequence is HLILQGHWPYGLFLCK. An intrachain disulfide couples cysteine 95 to cysteine 172. Residues 97-118 traverse the membrane as a helical segment; it reads LIPSIIILNMFASVFLLTAISL. The Cytoplasmic segment spans residues 119–139; sequence DRCLIVHKPIWCQNHRNVRTA. A helical transmembrane segment spans residues 140-160; it reads FAICGCVWVVAFVMCVPVFVY. Over 161 to 333 the chain is Extracellular; that stretch reads RDLFIMDNRS…TPLMAITITR (173 aa). Asparagine 168 carries N-linked (GlcNAc...) asparagine glycosylation. 2 positions are modified to sulfotyrosine: tyrosine 174 and tyrosine 184. N-linked (GlcNAc...) asparagine glycosylation is found at asparagine 197 and asparagine 201. At tyrosine 312 the chain carries Sulfotyrosine. A helical membrane pass occupies residues 334–353; that stretch reads LVVGFLVPFFIMVICYSLIV. Residues 354–370 are Cytoplasmic-facing; that stretch reads FRMRKTNFTKSRNKTFR. A helical membrane pass occupies residues 371–393; sequence VAVAVVTVFFICWTPYHLVGVLL. Residues 394 to 410 are Extracellular-facing; the sequence is LITDPESSLGEAVMSWD. Residues 411-431 form a helical membrane-spanning segment; sequence HMSIALASANSCFNPFLYALL. The Cytoplasmic segment spans residues 432 to 477; the sequence is GKDFRKKARQSIKGILEAAFSEELTHSTNCTQDKASSKRNNMSTDV. Serine 452 carries the post-translational modification Phosphoserine. Position 456 is a phosphothreonine (threonine 456).

The protein belongs to the G-protein coupled receptor 1 family. Interacts with VGF-derived peptide TLQP-21. In terms of tissue distribution, detected in varying levels in all tissues examined except the spleen. Especially abundant in heart and lung.

It localises to the cell membrane. Functionally, receptor for the chemotactic and inflammatory peptide anaphylatoxin C3a. This receptor stimulates chemotaxis, granule enzyme release and superoxide anion production. This is C3a anaphylatoxin chemotactic receptor (C3ar1) from Mus musculus (Mouse).